A 431-amino-acid polypeptide reads, in one-letter code: 5-methylthioadenosine/S-adenosylhomocysteine deaminase (431 aa).

Zn(2+) contacts are provided by His-68 and His-70. Glu-97 and His-186 together coordinate substrate. Zn(2+) is bound at residue His-213. 2 residues coordinate substrate: Glu-216 and Asp-301. Asp-301 contacts Zn(2+).

It belongs to the metallo-dependent hydrolases superfamily. MTA/SAH deaminase family. The cofactor is Zn(2+).

It carries out the reaction S-adenosyl-L-homocysteine + H2O + H(+) = S-inosyl-L-homocysteine + NH4(+). The catalysed reaction is S-methyl-5'-thioadenosine + H2O + H(+) = S-methyl-5'-thioinosine + NH4(+). Functionally, catalyzes the deamination of 5-methylthioadenosine and S-adenosyl-L-homocysteine into 5-methylthioinosine and S-inosyl-L-homocysteine, respectively. Is also able to deaminate adenosine. The protein is 5-methylthioadenosine/S-adenosylhomocysteine deaminase of Halothermothrix orenii (strain H 168 / OCM 544 / DSM 9562).